Here is a 475-residue protein sequence, read N- to C-terminus: Lipoprotein lipase (475 aa).

A signal peptide spans 1–27 (MESKALLLVALGMWFQSLTATRGGVAA). The interaction with GPIHBP1 stretch occupies residues 32-53 (GDFIDIESKFALRTPEDTAEDT). The cysteines at positions 54 and 67 are disulfide-linked. Asparagine 70 is a glycosylation site (N-linked (GlcNAc...) asparagine). 3'-nitrotyrosine is present on tyrosine 121. Serine 159 acts as the Nucleophile in catalysis. The active-site Charge relay system is aspartate 183. Tyrosine 191 bears the 3'-nitrotyrosine mark. Residues alanine 194, arginine 197, serine 199, and aspartate 202 each coordinate Ca(2+). A disulfide bridge connects residues cysteine 243 and cysteine 266. Residue histidine 268 is the Charge relay system of the active site. 2 disulfide bridges follow: cysteine 291/cysteine 310 and cysteine 302/cysteine 305. Positions 341–464 (FHYQVKIHFS…KGKASVVFVK (124 aa)) constitute a PLAT domain. At tyrosine 343 the chain carries 3'-nitrotyrosine. Asparagine 386 carries N-linked (GlcNAc...) asparagine glycosylation. Residues 417–421 (WSDWW) form an important for interaction with lipoprotein particles region. An important for heparin binding region spans residues 430–434 (KIRVK). The interaction with GPIHBP1 stretch occupies residues 443 to 467 (IFCSREKVSHLQKGKASVVFVKCHD). Cysteines 445 and 465 form a disulfide.

It belongs to the AB hydrolase superfamily. Lipase family. Homodimer. Interacts with GPIHBP1 with 1:1 stoichiometry. Interacts with APOC2; the interaction activates LPL activity in the presence of lipids. Interaction with heparan sulfate proteoglycans is required to protect LPL against loss of activity. Associates with lipoprotein particles in blood plasma. Interacts with LMF1 and SEL1L; interaction with SEL1L is required to prevent aggregation of newly synthesized LPL in the endoplasmic reticulum (ER), and for normal export of LPL from the ER to the extracellular space. Interacts with SORL1; SORL1 acts as a sorting receptor, promoting LPL localization to endosomes and later to lysosomes, leading to degradation of newly synthesized LPL. Tyrosine nitration after lipopolysaccharide (LPS) challenge down-regulates the lipase activity.

The protein resides in the cell membrane. It is found in the secreted. The protein localises to the extracellular space. Its subcellular location is the extracellular matrix. It catalyses the reaction a triacylglycerol + H2O = a diacylglycerol + a fatty acid + H(+). The apolipoprotein APOC2 acts as a coactivator of LPL activity. Ca(2+) binding promotes protein stability and formation of the active homodimer. Interaction with GPIHBP1 protects LPL against inactivation by ANGPTL4. In terms of biological role, key enzyme in triglyceride metabolism. Catalyzes the hydrolysis of triglycerides from circulating chylomicrons and very low density lipoproteins (VLDL), and thereby plays an important role in lipid clearance from the blood stream, lipid utilization and storage. Mediates margination of triglyceride-rich lipoprotein particles in capillaries. Recruited to its site of action on the luminal surface of vascular endothelium by binding to GPIHBP1 and cell surface heparan sulfate proteoglycans. The chain is Lipoprotein lipase (LPL) from Neovison vison (American mink).